Consider the following 228-residue polypeptide: UPF0758 protein stu1465 (228 aa).

In terms of domain architecture, MPN spans 103-225; it reads QIMSSQQVAR…YYSFREERED (123 aa). Zn(2+)-binding residues include His-174, His-176, and Asp-187. Positions 174 to 187 match the JAMM motif motif; the sequence is HNHPSGEAYPSRND.

The protein belongs to the UPF0758 family.

The protein is UPF0758 protein stu1465 of Streptococcus thermophilus (strain ATCC BAA-250 / LMG 18311).